Consider the following 240-residue polypeptide: Adenylate dimethylallyltransferase (240 aa).

The protein belongs to the isopentenyl transferase family.

It carries out the reaction dimethylallyl diphosphate + AMP = N(6)-(dimethylallyl)adenosine 5'-phosphate + diphosphate. Functionally, transfers dimethylallyl groups to AMP as part of the biosynthesis of cytokinin phytohormones. The chain is Adenylate dimethylallyltransferase (izt) from Agrobacterium tumefaciens (strain Ach5).